The chain runs to 165 residues: Nucleoside-triphosphatase THEP1 (165 aa).

Residues Gly7–Thr14 and Leu93–Gly100 each bind ATP.

This sequence belongs to the THEP1 NTPase family.

The catalysed reaction is a ribonucleoside 5'-triphosphate + H2O = a ribonucleoside 5'-diphosphate + phosphate + H(+). In terms of biological role, has nucleotide phosphatase activity towards ATP, GTP, CTP, TTP and UTP. May hydrolyze nucleoside diphosphates with lower efficiency. In Archaeoglobus fulgidus (strain ATCC 49558 / DSM 4304 / JCM 9628 / NBRC 100126 / VC-16), this protein is Nucleoside-triphosphatase THEP1.